A 360-amino-acid chain; its full sequence is Peptide chain release factor 1 (360 aa).

Residue glutamine 235 is modified to N5-methylglutamine. The segment covering 283 to 308 has biased composition (basic and acidic residues); the sequence is MQKRQQAEASERRNLLGSGDRSDRNR. Residues 283–313 form a disordered region; the sequence is MQKRQQAEASERRNLLGSGDRSDRNRTYNFP.

The protein belongs to the prokaryotic/mitochondrial release factor family. Methylated by PrmC. Methylation increases the termination efficiency of RF1.

It is found in the cytoplasm. Peptide chain release factor 1 directs the termination of translation in response to the peptide chain termination codons UAG and UAA. In Yersinia enterocolitica serotype O:8 / biotype 1B (strain NCTC 13174 / 8081), this protein is Peptide chain release factor 1.